The primary structure comprises 3718 residues: MAKRGGQLCAGSAPGALGPRSPAPRPLLLLLAGLALVGEARTPGGDGFSLHPPYFNLAEGARITASATCGEEAPTRSVSRPTEDLYCKLVGGPVAGGDPNQTIQGQYCDICTAANSNKAHPVSNAIDGTERWWQSPPLSRGLEYNEVNVTLDLGQVFHVAYVLIKFANSPRPDLWVLERSTDFGHTYQPWQFFASSKRDCLERFGPRTLERITQDDDVICTTEYSRIVPLENGEIVVSLVNGRPGALNFSYSPLLRDFTKATNIRLRFLRTNTLLGHLMGKALRDPTVTRRYYYSIKDISIGGRCVCHGHADVCDAKDPLDPFRLQCACQHNTCGGSCDRCCPGFNQQPWKPATTDSANECQSCNCHGHAYDCYYDPEVDRRNASQNQDNVYQGGGVCLDCQHHTTGINCERCLPGFFRAPDQPLDSPHVCRPCDCESDFTDGTCEDLTGRCYCRPNFTGELCAACAEGYTDFPHCYPLPSFPHNDTREQVLPAGQIVNCDCNAAGTQGNACRKDPRLGRCVCKPNFRGAHCELCAPGFHGPSCHPCQCSSPGVANSLCDPESGQCMCRTGFEGDRCDHCALGYFHFPLCQLCGCSPAGTLPEGCDEAGRCQCRPGFDGPHCDRCLPGYHGYPDCHACACDPRGALDQQCGVGGLCHCRPGYTGATCQECSPGFYGFPSCIPCHCSADGSLHTTCDPTTGQCRCRPRVTGLHCDMCVPGAYNFPYCEAGSCHPAGLAPANPALPETQAPCMCRAHVEGPSCDRCKPGYWGLSASNPEGCTRCSCDPRGTLGGVTECQGNGQCFCKAHVCGKTCAACKDGFFGLDYADYFGCRSCRCDVGGALGQGCEPKTGACRCRPNTQGPTCSEPAKDHYLPDLHHMRLELEEAATPEGHAVRFGFNPLEFENFSWRGYAHMMAIQPRIVARLNVTSPDLFRLVFRYVNRGSTSVNGQISVREEGKLSSCTNCTEQSQPVAFPPSTEPAFVTVPQRGFGEPFVLNPGIWALLVEAEGVLLDYVVLLPSTYYEAALLQHRVTEACTYRPSALHSTENCLVYAHLPLDGFPSAAGTEALCRHDNSLPRPCPTEQLSPSHPPLATCFGSDVDIQLEMAVPQPGQYVLVVEYVGEDSHQEMGVAVHTPQRAPQQGVLNLHPCPYSSLCRSPARDTQHHLAIFYLDSEASIRLTAEQAHFFLHSVTLVPVEEFSTEFVEPRVFCVSSHGTFNPSSAACLASRFPKPPQPIILKDCQVLPLPPDLPLTQSQELSPGAPPEGPQPRPPTAVDPNAEPTLLRHPQGTVVFTTQVPTLGRYAFLLHGYQPVHPSFPVEVLINGGRIWQGHANASFCPHGYGCRTLVLCEGQTMLDVTDNELTVTVRVPEGRWLWLDYVLIVPEDAYSSSYLQEEPLDKSYDFISHCATQGYHISPSSSSPFCRNAATSLSLFYNNGALPCGCHEVGAVSPTCEPFGGQCPCRGHVIGRDCSRCATGYWGFPNCRPCDCGARLCDELTGQCICPPRTVPPDCLVCQPQSFGCHPLVGCEECNCSGPGVQELTDPTCDMDSGQCRCRPNVAGRRCDTCAPGFYGYPSCRPCDCHEAGTMASVCDPLTGQCHCKENVQGSRCDQCRVGTFSLDAANPKGCTRCFCFGATERCGNSNLARHEFVDMEGWVLLSSDRQVVPHEHRPEIELLHADLRSVADTFSELYWQAPPSYLGDRVSSYGGTLHYELHSETQRGDIFIPYESRPDVVLQGNQMSIAFLELAYPPPGQVHRGQLQLVEGNFRHLETHNPVSREELMMVLAGLEQLQIRALFSQTSSSVSLRRVVLEVASEAGRGPPASNVELCMCPANYRGDSCQECAPGYYRDTKGLFLGRCVPCQCHGHSDRCLPGSGICVGCQHNTEGDQCERCRPGFVSSDPSNPASPCVSCPCPLAVPSNNFADGCVLRNGRTQCLCRPGYAGASCERCAPGFFGNPLVLGSSCQPCDCSGNGDPNMIFSDCDPLTGACRGCLRHTTGPHCERCAPGFYGNALLPGNCTRCDCSPCGTETCDPQSGRCLCKAGVTGQRCDRCLEGYFGFEQCQGCRPCACGPAAKGSECHPQSGQCHCQPGTTGPQCLECAPGYWGLPEKGCRRCQCPRGHCDPHTGHCTCPPGLSGERCDTCSQQHQVPVPGKPGGHGIHCEVCDHCVVLLLDDLERAGALLPAIREQLQGINASSAAWARLHRLNASIADLQSKLRSPPGPRYQAAQQLQTLEQQSISLQQDTERLGSQATGVQGQAGQLLDTTESTLGRAQKLLESVRAVGRALNELASRMGQGSPGDALVPSGEQLRWALAEVERLLWDMRTRDLGAQGAVAEAELAEAQRLMARVQEQLTSFWEENQSLATHIRDQLAQYESGLMDLREALNQAVNTTREAEELNSRNQERLKEALQWKQELSQDNATLKATLQAASLILGHVSELLQGIDQAKEDLEHLAASLDGAWTPLLKRMQAFSPASSKVDLVEAAEAHAQKLNQLAINLSGIILGINQDRFIQRAVEASNAYSSILQAVQAAEDAAGQALRQASRTWEMVVQRGLAAGARQLLANSSALEETILGHQGRLGLAQGRLQAAGIQLHNVWARKNQLAAQIQEAQAMLAMDTSETSEKIAHAKAVAAEALSTATHVQSQLQGMQKNVERWQSQLGGLQGQDLSQVERDASSSVSTLEKTLPQLLAKLSRLENRGVHNASLALSANIGRVRKLIAQARSAASKVKVSMKFNGRSGVRLRTPRDLADLAAYTALKFHIQSPVPAPEPGKNTGDHFVLYMGSRQATGDYMGVSLRNQKVHWVYRLGKAGPTTLSIDENIGEQFAAVSIDRTLQFGHMSVTVEKQMVHEIKGDTVAPGSEGLLNLHPDDFVFYVGGYPSNFTPPEPLRFPGYLGCIEMETLNEEVVSLYNFEQTFMLDTAVDKPCARSKATGDPWLTDGSYLDGSGFARISFEKQFSNTKRFDQELRLVSYNGIIFFLKQESQFLCLAVQEGTLVLFYDFGSGLKKADPLQPPQALTAASKAIQVFLLAGNRKRVLVRVERATVFSVDQDNMLEMADAYYLGGVPPEQLPLSLRQLFPSGGSVRGCIKGIKALGKYVDLKRLNTTGISFGCTADLLVGRTMTFHGHGFLPLALPDVAPITEVVYSGFGFRGTQDNNLLYYRTSPDGPYQVSLREGHVTLRFMNQEVETQRVFADGAPHYVAFYSNVTGVWLYVDDQLQLVKSHERTTPMLQLQPEEPSRLLLGGLPVSGTFHNFSGCISNVFVQRLRGPQRVFDLHQNMGSVNVSVGCTPAQLIETSRATAQKVSRRSRQPSQDLACTTPWLPGTIQDAYQFGGPLPSYLQFVGISPSHRNRLHLSMLVRPHAASQGLLLSTAPMSGRSPSLVLFLNHGHFVAQTEGPGPRLQVQSRQHSRAGQWHRVSVRWGMQQIQLVVDGSQTWSQKALHHRVPRAERPQPYTLSVGGLPASSYSSKLPVSVGFSGCLKKLQLDKRPLRTPTQMVGVTPCVSGPLEDGLFFPGSEGVVTLELPKAKMPYVSLELEMRPLAAAGLIFHLGQALATPYMQLKVLTEQVLLQANDGAGEFSTWVTYPKLCDGRWHRVAVIMGRDTLRLEVDTQSNHTTGRLPESLAGSPALLHLGSLPKSSTARPELPAYRGCLRKLLINGAPVNVTASVQIQGAVGMRGCPSGTLALSKQGKALTQRQAKPSVSPLLWH.

An N-terminal signal peptide occupies residues 1-40 (MAKRGGQLCAGSAPGALGPRSPAPRPLLLLLAGLALVGEA). The region spanning 46–304 (DGFSLHPPYF…SIKDISIGGR (259 aa)) is the Laminin N-terminal domain. Asparagine 100, asparagine 148, and asparagine 248 each carry an N-linked (GlcNAc...) asparagine glycan. Disulfide bonds link cysteine 305-cysteine 314, cysteine 307-cysteine 327, cysteine 329-cysteine 338, cysteine 341-cysteine 361, cysteine 364-cysteine 373, cysteine 366-cysteine 398, cysteine 401-cysteine 410, cysteine 413-cysteine 431, cysteine 434-cysteine 445, cysteine 436-cysteine 452, cysteine 454-cysteine 463, and cysteine 466-cysteine 476. Laminin EGF-like domains follow at residues 305 to 363 (CVCH…ECQS), 364 to 433 (CNCH…VCRP), and 434 to 479 (CDCE…CYPL). Asparagine 383 carries N-linked (GlcNAc...) asparagine glycosylation. A glycan (N-linked (GlcNAc...) asparagine) is linked at asparagine 457. A glycan (N-linked (GlcNAc...) asparagine) is linked at asparagine 485. 29 cysteine pairs are disulfide-bonded: cysteine 500–cysteine 512, cysteine 502–cysteine 521, cysteine 523–cysteine 532, cysteine 535–cysteine 544, cysteine 547–cysteine 559, cysteine 549–cysteine 566, cysteine 568–cysteine 577, cysteine 580–cysteine 590, cysteine 593–cysteine 605, cysteine 595–cysteine 611, cysteine 613–cysteine 622, cysteine 625–cysteine 635, cysteine 638–cysteine 650, cysteine 640–cysteine 656, cysteine 658–cysteine 667, cysteine 670–cysteine 680, cysteine 683–cysteine 695, cysteine 685–cysteine 702, cysteine 704–cysteine 713, cysteine 716–cysteine 731, cysteine 752–cysteine 761, cysteine 764–cysteine 779, cysteine 782–cysteine 796, cysteine 784–cysteine 802, cysteine 804–cysteine 813, cysteine 816–cysteine 831, cysteine 834–cysteine 846, cysteine 836–cysteine 853, and cysteine 855–cysteine 864. Laminin EGF-like domains are found at residues 500–546 (CDCN…SCHP), 547–592 (CQCS…LCQL), 593–637 (CGCS…DCHA), 638–682 (CACD…SCIP), 683–728 (CHCS…YCEA), 729–781 (GSCH…GCTR), and 782–833 (CSCD…GCRS). The Laminin EGF-like 11; truncated domain maps to 834 to 855 (CRCDVGGALGQGCEPKTGACRC). A domain IV 1 (domain IV B) region spans residues 856–1442 (RPNTQGPTCS…SLFYNNGALP (587 aa)). Residues asparagine 905, asparagine 926, and asparagine 964 are each glycosylated (N-linked (GlcNAc...) asparagine). The tract at residues 1253–1284 (LTQSQELSPGAPPEGPQPRPPTAVDPNAEPTL) is disordered. A compositionally biased stretch (pro residues) spans 1262–1275 (GAPPEGPQPRPPTA). The N-linked (GlcNAc...) asparagine glycan is linked to asparagine 1335. 16 disulfides stabilise this stretch: cysteine 1443–cysteine 1455, cysteine 1445–cysteine 1462, cysteine 1464–cysteine 1473, cysteine 1476–cysteine 1486, cysteine 1489–cysteine 1496, cysteine 1491–cysteine 1503, cysteine 1505–cysteine 1514, cysteine 1517–cysteine 1530, cysteine 1533–cysteine 1548, cysteine 1535–cysteine 1555, cysteine 1557–cysteine 1566, cysteine 1569–cysteine 1579, cysteine 1582–cysteine 1594, cysteine 1584–cysteine 1601, cysteine 1603–cysteine 1612, and cysteine 1615–cysteine 1630. 4 consecutive Laminin EGF-like domains span residues 1443-1488 (CGCH…NCRP), 1489-1532 (CDCG…GCEE), 1533-1581 (CNCS…SCRP), and 1582-1632 (CDCH…GCTR). A glycan (N-linked (GlcNAc...) asparagine) is linked at asparagine 1534. A Laminin EGF-like 16; first part domain is found at 1633-1642 (CFCFGATERC). The region spanning 1646 to 1831 (NLARHEFVDM…RGPPASNVEL (186 aa)) is the Laminin IV type A domain. 2 consecutive short sequence motifs (cell attachment site) follow at residues 1723–1725 (RGD) and 1839–1841 (RGD). The Laminin EGF-like 16; second part domain occupies 1832–1864 (CMCPANYRGDSCQECAPGYYRDTKGLFLGRCVP). 24 cysteine pairs are disulfide-bonded: cysteine 1865–cysteine 1874, cysteine 1867–cysteine 1881, cysteine 1884–cysteine 1893, cysteine 1896–cysteine 1912, cysteine 1915–cysteine 1930, cysteine 1917–cysteine 1939, cysteine 1941–cysteine 1950, cysteine 1953–cysteine 1968, cysteine 1971–cysteine 1986, cysteine 1973–cysteine 1993, cysteine 1996–cysteine 2005, cysteine 2008–cysteine 2022, cysteine 2025–cysteine 2035, cysteine 2027–cysteine 2042, cysteine 2044–cysteine 2053, cysteine 2056–cysteine 2069, cysteine 2072–cysteine 2083, cysteine 2074–cysteine 2090, cysteine 2092–cysteine 2101, cysteine 2104–cysteine 2116, cysteine 2119–cysteine 2126, cysteine 2121–cysteine 2133, cysteine 2135–cysteine 2144, and cysteine 2147–cysteine 2166. 6 Laminin EGF-like domains span residues 1865-1914 (CQCH…PCVS), 1915-1970 (CPCP…SCQP), 1971-2024 (CDCS…NCTR), 2025-2071 (CDCS…GCRP), 2072-2118 (CACG…GCRR), and 2119-2168 (CQCP…HCEV). An N-linked (GlcNAc...) asparagine glycan is attached at asparagine 2021. The segment at 2169–2735 (CDHCVVLLLD…AQARSAASKV (567 aa)) is domain II and I. Residues asparagine 2198, asparagine 2211, asparagine 2365, asparagine 2395, asparagine 2425, asparagine 2503, and asparagine 2570 are each glycosylated (N-linked (GlcNAc...) asparagine). Coiled coils occupy residues 2205 to 2257 (ARLH…SQAT) and 2330 to 2464 (TRDL…ASLD). 2 coiled-coil regions span residues 2604–2621 (ARKN…AMLA) and 2639–2705 (AEAL…LENR). Asparagine 2709 carries N-linked (GlcNAc...) asparagine glycosylation. Laminin G-like domains lie at 2736–2933 (KVSM…DKPC), 2947–3119 (GSYL…SFGC), 3128–3296 (TMTF…SVGC), 3337–3511 (AYQF…VTPC), and 3518–3689 (DGLF…MRGC). Cystine bridges form between cysteine 2903-cysteine 2933 and cysteine 3094-cysteine 3119. Residues asparagine 3111, asparagine 3213, asparagine 3261, and asparagine 3291 are each glycosylated (N-linked (GlcNAc...) asparagine). 2 disulfide bridges follow: cysteine 3265–cysteine 3296 and cysteine 3488–cysteine 3511. N-linked (GlcNAc...) asparagine glycosylation is found at asparagine 3623 and asparagine 3673. Cysteines 3661 and 3689 form a disulfide.

In terms of assembly, laminin is a complex glycoprotein, consisting of three different polypeptide chains (alpha, beta, gamma), which are bound to each other by disulfide bonds into a cross-shaped molecule comprising one long and three short arms with globules at each end. Alpha-5 is a subunit of laminin-10 (laminin-511), laminin-11 (laminin-521) and laminin-15 (laminin-523). In terms of tissue distribution, in adult, high levels in heart, lung, and kidney; lower in brain, muscle and testis; very low in liver, gut and skin.

The protein resides in the secreted. It is found in the extracellular space. The protein localises to the extracellular matrix. Its subcellular location is the basement membrane. In terms of biological role, binding to cells via a high affinity receptor, laminin is thought to mediate the attachment, migration and organization of cells into tissues during embryonic development by interacting with other extracellular matrix components. Alpha-5 may be the major laminin alpha chain of adult epithelial and/or endothelial basal laminae. Plays a role in the regulation of skeletogenesis, through a mechanism that involves integrin-mediated signaling and PTK2B/PYK2. In Mus musculus (Mouse), this protein is Laminin subunit alpha-5 (Lama5).